Here is a 192-residue protein sequence, read N- to C-terminus: Protein GrpE (192 aa).

It belongs to the GrpE family. Homodimer.

The protein localises to the cytoplasm. In terms of biological role, participates actively in the response to hyperosmotic and heat shock by preventing the aggregation of stress-denatured proteins, in association with DnaK and GrpE. It is the nucleotide exchange factor for DnaK and may function as a thermosensor. Unfolded proteins bind initially to DnaJ; upon interaction with the DnaJ-bound protein, DnaK hydrolyzes its bound ATP, resulting in the formation of a stable complex. GrpE releases ADP from DnaK; ATP binding to DnaK triggers the release of the substrate protein, thus completing the reaction cycle. Several rounds of ATP-dependent interactions between DnaJ, DnaK and GrpE are required for fully efficient folding. The sequence is that of Protein GrpE from Neisseria gonorrhoeae (strain ATCC 700825 / FA 1090).